The sequence spans 472 residues: tRNA-2-methylthio-N(6)-dimethylallyladenosine synthase (472 aa).

The tract at residues 1–24 is disordered; sequence MTGTPDVFPPATPGGTPLVALPAG. In terms of domain architecture, MTTase N-terminal spans 33–150; sequence GKLYIKTHGC…LPELIRARRE (118 aa). 6 residues coordinate [4Fe-4S] cluster: C42, C79, C113, C187, C191, and C194. Positions 173 to 407 constitute a Radical SAM core domain; it reads RADGASAFVS…RINAHAAGIS (235 aa). A TRAM domain is found at 408–471; the sequence is EKMVGTVQTV…TNSLRARVVA (64 aa).

It belongs to the methylthiotransferase family. MiaB subfamily. As to quaternary structure, monomer. [4Fe-4S] cluster is required as a cofactor.

It is found in the cytoplasm. The enzyme catalyses N(6)-dimethylallyladenosine(37) in tRNA + (sulfur carrier)-SH + AH2 + 2 S-adenosyl-L-methionine = 2-methylsulfanyl-N(6)-dimethylallyladenosine(37) in tRNA + (sulfur carrier)-H + 5'-deoxyadenosine + L-methionine + A + S-adenosyl-L-homocysteine + 2 H(+). In terms of biological role, catalyzes the methylthiolation of N6-(dimethylallyl)adenosine (i(6)A), leading to the formation of 2-methylthio-N6-(dimethylallyl)adenosine (ms(2)i(6)A) at position 37 in tRNAs that read codons beginning with uridine. This chain is tRNA-2-methylthio-N(6)-dimethylallyladenosine synthase, found in Stenotrophomonas maltophilia (strain R551-3).